Here is a 259-residue protein sequence, read N- to C-terminus: F-box/kelch-repeat protein At2g22050 (259 aa).

Over residues 1 to 12 (MSPSSKKFKKQS) the composition is skewed to basic residues. The disordered stretch occupies residues 1–29 (MSPSSKKFKKQSSSKSVKPPLEDNDPSLP). Positions 28-76 (LPSFTSLPDEIVLDCLQRVPRSYYLNLCRVSKTLRSLVRSPELSRLRTL) constitute an F-box domain. Residues 142–186 (EIYFVGGSFEPMSELWILDTRTGMFRQGPSMKVARTDEASVGVIN) form a Kelch repeat.

The chain is F-box/kelch-repeat protein At2g22050 from Arabidopsis thaliana (Mouse-ear cress).